The sequence spans 272 residues: Indole-3-glycerol phosphate synthase (272 aa).

This sequence belongs to the TrpC family.

The enzyme catalyses 1-(2-carboxyphenylamino)-1-deoxy-D-ribulose 5-phosphate + H(+) = (1S,2R)-1-C-(indol-3-yl)glycerol 3-phosphate + CO2 + H2O. It functions in the pathway amino-acid biosynthesis; L-tryptophan biosynthesis; L-tryptophan from chorismate: step 4/5. This Mycobacterium leprae (strain Br4923) protein is Indole-3-glycerol phosphate synthase.